The following is a 557-amino-acid chain: MQVTQEKRPGSRVGLKIVVEADQVKRSYEKTLRQLERNIQIPGFRKGKAPRNLVIRQVGRERVMASAVDDLINEAIQQALKDTQLHPISRFELDDKVEQLLDRFNPEADFSFSGYVEVYPEARVGQYKGLTVTATRVTVKPEQIDQLIDRWRDQRATLLPVEDRPAQLGDVVVIDFQARDAEGNPLEEIAAQDFQLELKEENFIPGFVAGVVGMQLDQTKEITATFPDDYFRKELAGKTVTFTVCLKEIKTKELPELDDAFVQEISEFQTVAELREHLQKRLEQDALRQSEENLETAILNAILETTEVDLPETLVEQETTQLLARSLQSLQQQQGVTPGEIRKFLSQLPPETLNQLMERHRPEAINRLRRTLALSAIVRQEQIAVGPNELEVEVEEVMAAYAQQGQKLDRERVRQAVHEDLLANKVMAWLKSQTTVNWVDSEGNPTEPPTLSPRSEGEDRQERSESARAGVPETEFEAEKPEGSAIPEAVEPPVDAKAEGEVATEPQAALPSVEAEASGIPEAVEPSAEAATDPAGLQLEQAVAETPKAGKKSKKDK.

One can recognise a PPIase FKBP-type domain in the interval 169–255; sequence GDVVVIDFQA…LKEIKTKELP (87 aa). The interval 438 to 557 is disordered; sequence WVDSEGNPTE…KAGKKSKKDK (120 aa). Positions 455–466 are enriched in basic and acidic residues; it reads SEGEDRQERSES.

Belongs to the FKBP-type PPIase family. Tig subfamily.

Its subcellular location is the cytoplasm. It catalyses the reaction [protein]-peptidylproline (omega=180) = [protein]-peptidylproline (omega=0). Its function is as follows. Involved in protein export. Acts as a chaperone by maintaining the newly synthesized protein in an open conformation. Functions as a peptidyl-prolyl cis-trans isomerase. This chain is Trigger factor, found in Synechococcus sp. (strain JA-3-3Ab) (Cyanobacteria bacterium Yellowstone A-Prime).